Consider the following 494-residue polypeptide: Bifunctional protein HldE (494 aa).

The tract at residues 1–334 (MPTPILDFDA…RKILPHAYLA (334 aa)) is ribokinase. Position 209 to 212 (209 to 212 (NRKE)) interacts with ATP. The active site involves D279. Residues 362–494 (FTNGCFDILH…LVHRARGGAK (133 aa)) form a cytidylyltransferase region.

The protein in the N-terminal section; belongs to the carbohydrate kinase PfkB family. It in the C-terminal section; belongs to the cytidylyltransferase family. In terms of assembly, homodimer.

It carries out the reaction D-glycero-beta-D-manno-heptose 7-phosphate + ATP = D-glycero-beta-D-manno-heptose 1,7-bisphosphate + ADP + H(+). The enzyme catalyses D-glycero-beta-D-manno-heptose 1-phosphate + ATP + H(+) = ADP-D-glycero-beta-D-manno-heptose + diphosphate. It functions in the pathway nucleotide-sugar biosynthesis; ADP-L-glycero-beta-D-manno-heptose biosynthesis; ADP-L-glycero-beta-D-manno-heptose from D-glycero-beta-D-manno-heptose 7-phosphate: step 1/4. The protein operates within nucleotide-sugar biosynthesis; ADP-L-glycero-beta-D-manno-heptose biosynthesis; ADP-L-glycero-beta-D-manno-heptose from D-glycero-beta-D-manno-heptose 7-phosphate: step 3/4. Functionally, catalyzes the phosphorylation of D-glycero-D-manno-heptose 7-phosphate at the C-1 position to selectively form D-glycero-beta-D-manno-heptose-1,7-bisphosphate. Its function is as follows. Catalyzes the ADP transfer from ATP to D-glycero-beta-D-manno-heptose 1-phosphate, yielding ADP-D-glycero-beta-D-manno-heptose. The chain is Bifunctional protein HldE from Bradyrhizobium diazoefficiens (strain JCM 10833 / BCRC 13528 / IAM 13628 / NBRC 14792 / USDA 110).